We begin with the raw amino-acid sequence, 55 residues long: Large ribosomal subunit protein bL33 (55 aa).

The protein belongs to the bacterial ribosomal protein bL33 family.

The sequence is that of Large ribosomal subunit protein bL33 from Cereibacter sphaeroides (strain ATCC 17029 / ATH 2.4.9) (Rhodobacter sphaeroides).